The primary structure comprises 208 residues: Ribosomal RNA large subunit methyltransferase E (208 aa).

Residues glycine 61, tryptophan 63, aspartate 81, aspartate 97, and aspartate 122 each coordinate S-adenosyl-L-methionine. The active-site Proton acceptor is lysine 162.

It belongs to the class I-like SAM-binding methyltransferase superfamily. RNA methyltransferase RlmE family.

It is found in the cytoplasm. The enzyme catalyses uridine(2552) in 23S rRNA + S-adenosyl-L-methionine = 2'-O-methyluridine(2552) in 23S rRNA + S-adenosyl-L-homocysteine + H(+). Specifically methylates the uridine in position 2552 of 23S rRNA at the 2'-O position of the ribose in the fully assembled 50S ribosomal subunit. This chain is Ribosomal RNA large subunit methyltransferase E, found in Pseudomonas putida (strain GB-1).